A 1212-amino-acid chain; its full sequence is Probable serine/threonine-protein kinase DDB_G0284491 (1212 aa).

A helical transmembrane segment spans residues Leu197 to Ile217. Residues Asn229, Asn299, Asn309, Asn328, Asn335, Asn341, Asn344, Asn391, Asn419, Asn422, Asn426, Asn427, Asn435, and Asn499 are each glycosylated (N-linked (GlcNAc...) asparagine). The interval Leu288–Asp329 is disordered. Disordered stretches follow at residues Gly412–Gly439 and Ile489–Glu517. The segment covering Ile489 to Asn507 has biased composition (low complexity). The span at Asn508–Glu517 shows a compositional bias: acidic residues. The chain crosses the membrane as a helical span at residues Ile673–Leu693. Pro residues predominate over residues Val703 to Val720. Disordered stretches follow at residues Val703–Gly733 and Glu751–Asn813. The Protein kinase domain maps to Glu865–Tyr1182. Residues Phe871–Ile879 and Lys924 each bind ATP. Asp1035 serves as the catalytic Proton acceptor.

Belongs to the protein kinase superfamily. Ser/Thr protein kinase family.

Its subcellular location is the membrane. The enzyme catalyses L-seryl-[protein] + ATP = O-phospho-L-seryl-[protein] + ADP + H(+). The catalysed reaction is L-threonyl-[protein] + ATP = O-phospho-L-threonyl-[protein] + ADP + H(+). This Dictyostelium discoideum (Social amoeba) protein is Probable serine/threonine-protein kinase DDB_G0284491.